A 535-amino-acid chain; its full sequence is CTP synthase (535 aa).

Positions 1–266 (MKFVVITGGV…GDYICERLGL (266 aa)) are amidoligase domain. A CTP-binding site is contributed by Ser-12. Ser-12 is a binding site for UTP. ATP contacts are provided by residues 13-18 (GIGKGI) and Asp-70. Mg(2+)-binding residues include Asp-70 and Glu-140. Residues 147 to 149 (DIE), 187 to 192 (KTKPTQ), and Lys-223 contribute to the CTP site. UTP-binding positions include 187 to 192 (KTKPTQ) and Lys-223. A Glutamine amidotransferase type-1 domain is found at 291 to 535 (RIAVVGKYVD…IKAAAGQGPD (245 aa)). Residue Gly-355 coordinates L-glutamine. The Nucleophile; for glutamine hydrolysis role is filled by Cys-382. Residues 383 to 386 (LGFQ), Glu-406, and Arg-464 each bind L-glutamine. Active-site residues include His-508 and Glu-510.

The protein belongs to the CTP synthase family. In terms of assembly, homotetramer.

The catalysed reaction is UTP + L-glutamine + ATP + H2O = CTP + L-glutamate + ADP + phosphate + 2 H(+). It catalyses the reaction L-glutamine + H2O = L-glutamate + NH4(+). It carries out the reaction UTP + NH4(+) + ATP = CTP + ADP + phosphate + 2 H(+). Its pathway is pyrimidine metabolism; CTP biosynthesis via de novo pathway; CTP from UDP: step 2/2. Its activity is regulated as follows. Allosterically activated by GTP, when glutamine is the substrate; GTP has no effect on the reaction when ammonia is the substrate. The allosteric effector GTP functions by stabilizing the protein conformation that binds the tetrahedral intermediate(s) formed during glutamine hydrolysis. Inhibited by the product CTP, via allosteric rather than competitive inhibition. Catalyzes the ATP-dependent amination of UTP to CTP with either L-glutamine or ammonia as the source of nitrogen. Regulates intracellular CTP levels through interactions with the four ribonucleotide triphosphates. The chain is CTP synthase from Methanopyrus kandleri (strain AV19 / DSM 6324 / JCM 9639 / NBRC 100938).